A 206-amino-acid chain; its full sequence is Large ribosomal subunit protein uL3 (206 aa).

A disordered region spans residues 127 to 151 (SGGPSSHGSKFHRHLGGTGQATTPA).

This sequence belongs to the universal ribosomal protein uL3 family. As to quaternary structure, part of the 50S ribosomal subunit. Forms a cluster with proteins L14 and L19.

In terms of biological role, one of the primary rRNA binding proteins, it binds directly near the 3'-end of the 23S rRNA, where it nucleates assembly of the 50S subunit. This Borrelia garinii subsp. bavariensis (strain ATCC BAA-2496 / DSM 23469 / PBi) (Borreliella bavariensis) protein is Large ribosomal subunit protein uL3.